The sequence spans 117 residues: Regulator of ribonuclease activity B (117 aa).

Belongs to the RraB family. Interacts with the C-terminal region of Rne.

It is found in the cytoplasm. Globally modulates RNA abundance by binding to RNase E (Rne) and regulating its endonucleolytic activity. Can modulate Rne action in a substrate-dependent manner by altering the composition of the degradosome. This chain is Regulator of ribonuclease activity B, found in Pseudoalteromonas atlantica (strain T6c / ATCC BAA-1087).